The chain runs to 371 residues: Alanine dehydrogenase (371 aa).

Substrate contacts are provided by Arg15 and Lys75. His96 serves as the catalytic Proton donor/acceptor. Residues Ser134, Thr178–Ala179, Asp198, Lys203, Ser220, Val239–Leu240, Ile267–Asp270, Arg279, and Val298–Met301 contribute to the NAD(+) site. Asp270 functions as the Proton donor/acceptor in the catalytic mechanism. Residues Glu323 and His327 each contribute to the Mg(2+) site.

The protein belongs to the AlaDH/PNT family. In terms of assembly, homohexamer. Trimer of dimers. It depends on Mg(2+) as a cofactor.

The protein resides in the secreted. The enzyme catalyses L-alanine + NAD(+) + H2O = pyruvate + NH4(+) + NADH + H(+). The protein operates within amino-acid degradation; L-alanine degradation via dehydrogenase pathway; NH(3) and pyruvate from L-alanine: step 1/1. In terms of biological role, catalyzes the reversible reductive amination of pyruvate to L-alanine. However, since the physiological environment of M.tuberculosis has a neutral pH, it can be assumed that the enzyme catalyzes exclusively the formation of L-alanine. May play a role in cell wall synthesis as L-alanine is an important constituent of the peptidoglycan layer. This Mycobacterium tuberculosis (strain CDC 1551 / Oshkosh) protein is Alanine dehydrogenase (ald).